The primary structure comprises 378 residues: Polygalacturonase (378 aa).

Residues 1 to 20 (MILTRSVVLGFLGSASLALA) form the signal peptide. Residues Cys39 and Cys57 are joined by a disulfide bond. PbH1 repeat units follow at residues 172–203 (SSGL…DIGD), 204–225 (SDSI…AINS), 226–246 (GTNI…SIGS), 255–276 (VETV…RVKA), and 284–306 (IKGV…TIRQ). Residue Asp218 is the Proton donor of the active site. Cys220 and Cys236 are joined by a disulfide. His240 is a catalytic residue. Disulfide bonds link Cys346/Cys352 and Cys370/Cys378.

The protein belongs to the glycosyl hydrolase 28 family.

The protein localises to the secreted. It carries out the reaction (1,4-alpha-D-galacturonosyl)n+m + H2O = (1,4-alpha-D-galacturonosyl)n + (1,4-alpha-D-galacturonosyl)m.. The chain is Polygalacturonase (PEPG1) from Penicillium expansum (Blue mold rot fungus).